Consider the following 525-residue polypeptide: Glutamate--cysteine ligase (525 aa).

Belongs to the glutamate--cysteine ligase type 1 family. Type 1 subfamily.

The enzyme catalyses L-cysteine + L-glutamate + ATP = gamma-L-glutamyl-L-cysteine + ADP + phosphate + H(+). It functions in the pathway sulfur metabolism; glutathione biosynthesis; glutathione from L-cysteine and L-glutamate: step 1/2. The polypeptide is Glutamate--cysteine ligase (Vibrio vulnificus (strain CMCP6)).